A 256-amino-acid chain; its full sequence is Hydroxyacylglutathione hydrolase (256 aa).

Zn(2+)-binding residues include H57, H59, D61, H62, H115, D134, and H172.

It belongs to the metallo-beta-lactamase superfamily. Glyoxalase II family. Monomer. The cofactor is Zn(2+).

The enzyme catalyses an S-(2-hydroxyacyl)glutathione + H2O = a 2-hydroxy carboxylate + glutathione + H(+). It functions in the pathway secondary metabolite metabolism; methylglyoxal degradation; (R)-lactate from methylglyoxal: step 2/2. Its function is as follows. Thiolesterase that catalyzes the hydrolysis of S-D-lactoyl-glutathione to form glutathione and D-lactic acid. This Rhizobium etli (strain ATCC 51251 / DSM 11541 / JCM 21823 / NBRC 15573 / CFN 42) protein is Hydroxyacylglutathione hydrolase.